Here is an 852-residue protein sequence, read N- to C-terminus: Major vault protein (852 aa).

MVP repeat units follow at residues E2–R54, H55–A109, L110–N161, A162–N214, A215–E269, V270–T320, Y321–A377, I378–V457, and V458–P520.

The vault ribonucleoprotein particle is a huge (400 A x 670 A) cage structure of 12.9 MDa. It consists of a dimer of half-vaults, with each half-vault comprising 39 identical major vault protein (MVP) chains, PARP4 and one or more vault RNAs (vRNAs). In terms of tissue distribution, expression is highest in brain and enriched in the electric lobe. Closely associated with synaptic vesicles in the nerve terminals of the electric organ.

It is found in the cytoplasm. It localises to the nucleus. Functionally, required for normal vault structure. Vaults are multi-subunit structures that may act as scaffolds for proteins involved in signal transduction. Vaults may also play a role in nucleo-cytoplasmic transport. This is Major vault protein (MVP) from Diplobatis ommata (Ocellated electric ray).